The primary structure comprises 180 residues: UPF0227 protein KPN78578_10770 (180 aa).

It belongs to the UPF0227 family.

The sequence is that of UPF0227 protein KPN78578_10770 from Klebsiella pneumoniae subsp. pneumoniae (strain ATCC 700721 / MGH 78578).